The following is a 105-amino-acid chain: MKRGLRNGVAPCIPVAFCRDAGSAGHGATEAARPERSLQARGFASGMEARQGGDNFAGSVHDSRPARGDARKRHCQENNKTDRNQGSSNQSQNRRKKRIIKGKVM.

The disordered stretch occupies residues 22-105 (GSAGHGATEA…KKRIIKGKVM (84 aa)). Residues 61-83 (HDSRPARGDARKRHCQENNKTDR) are compositionally biased toward basic and acidic residues. Positions 93–105 (NRRKKRIIKGKVM) are enriched in basic residues.

This is an uncharacterized protein from Escherichia coli (strain K12).